Here is a 192-residue protein sequence, read N- to C-terminus: dTTP/UTP pyrophosphatase (192 aa).

Residue aspartate 71 is the Proton acceptor of the active site.

Belongs to the Maf family. YhdE subfamily. The cofactor is a divalent metal cation.

It is found in the cytoplasm. It catalyses the reaction dTTP + H2O = dTMP + diphosphate + H(+). The catalysed reaction is UTP + H2O = UMP + diphosphate + H(+). Nucleoside triphosphate pyrophosphatase that hydrolyzes dTTP and UTP. May have a dual role in cell division arrest and in preventing the incorporation of modified nucleotides into cellular nucleic acids. In Pseudoalteromonas atlantica (strain T6c / ATCC BAA-1087), this protein is dTTP/UTP pyrophosphatase.